We begin with the raw amino-acid sequence, 167 residues long: Cyclic pyranopterin monophosphate synthase 2 (167 aa).

Residues 1-23 are disordered; the sequence is MARASGASDYRSGELSHQDERGA. The span at 11–23 shows a compositional bias: basic and acidic residues; it reads RSGELSHQDERGA. Substrate contacts are provided by residues 86 to 88 and 122 to 123; these read LCH and ME. Asp137 is an active-site residue.

This sequence belongs to the MoaC family. In terms of assembly, homohexamer; trimer of dimers.

It carries out the reaction (8S)-3',8-cyclo-7,8-dihydroguanosine 5'-triphosphate = cyclic pyranopterin phosphate + diphosphate. The protein operates within cofactor biosynthesis; molybdopterin biosynthesis. Catalyzes the conversion of (8S)-3',8-cyclo-7,8-dihydroguanosine 5'-triphosphate to cyclic pyranopterin monophosphate (cPMP). The protein is Cyclic pyranopterin monophosphate synthase 2 (moaC2) of Mycobacterium bovis (strain ATCC BAA-935 / AF2122/97).